Consider the following 334-residue polypeptide: uncharacterized protein (334 aa).

The protein belongs to the MG414/MG415 family.

This is an uncharacterized protein from Mycoplasma pneumoniae (strain ATCC 29342 / M129 / Subtype 1) (Mycoplasmoides pneumoniae).